A 3375-amino-acid polypeptide reads, in one-letter code: Basement membrane proteoglycan (3375 aa).

The first 22 residues, 1–22, serve as a signal peptide directing secretion; the sequence is MKRSSTVLAALLALLLVATNDA. The region spanning 45–130 is the Ig-like C2-type 1 domain; sequence VQITVFPSEK…NTVEARATLS (86 aa). 11 disulfide bridges follow: C66/C114, C149/C161, C156/C174, C168/C183, C190/C202, C197/C215, C209/C224, C233/C246, C240/C259, C253/C268, and C293/C344. LDL-receptor class A domains lie at 148–184, 189–225, and 232–269; these read QCMA…ANCP, TCEP…LNCN, and DCKP…VGCV. An Ig-like C2-type 2 domain is found at 271–355; the sequence is PTVVDPPQTN…AINVKGRVLA (85 aa). Residues 364–385 are disordered; sequence VDDPRPQPPQPPTAPPQRASCD. Positions 369–378 are enriched in pro residues; the sequence is PQPPQPPTAP. 3 cysteine pairs are disulfide-bonded: C384-C400, C402-C411, and C414-C429. One can recognise a Laminin EGF-like 1; truncated domain in the interval 384–431; sequence CDTRGAVTPYPNNYGTCECKSQVTGPNCDQCKPGAFHLSEKSPEGCLK. One can recognise a Laminin EGF-like 2; first part domain in the interval 432–441; sequence CFCFGVSNDC. Residues 450-633 enclose the Laminin IV type A 1 domain; sequence KDRLMFAGDA…PDGLALEVEQ (184 aa). Disulfide bonds link C634/C648, C636/C689, C691/C700, and C703/C718. A Laminin EGF-like 2; second part domain is found at 634–666; the sequence is CVCPPGYLGTSCEDCAPGYERSGYGPYLGTCVP. The 47-residue stretch at 674–720 folds into the Laminin EGF-like 3; truncated domain; that stretch reads CGPGAVAPTAPAQGQCQCKASVIGPNCDRCAPNSFGLAPTNPQGCIP. In terms of domain architecture, Laminin EGF-like 4; first part spans 721 to 730; the sequence is CFCSGVTQQC. Positions 740–921 constitute a Laminin IV type A 2 domain; that stretch reads VSIDYARGDR…QGLTAAEVEQ (182 aa). One can recognise a Laminin EGF-like 4; second part domain in the interval 922 to 954; the sequence is CICPPGYVGTSCEDCAPGYSRTGGGLYLGLCEK. Intrachain disulfides connect C955–C964, C957–C971, C974–C983, C986–C1002, C1011–C1021, C1013–C1027, C1030–C1039, C1042–C1058, C1061–C1069, C1063–C1079, C1082–C1091, C1094–C1109, C1152–C1200, C1247–C1294, and C1338–C1384. 3 consecutive Laminin EGF-like domains span residues 955-1004, 1011-1060, and 1061-1111; these read CECN…DCQP, CHCN…DCTP, and CPCP…VCEP. Ig-like C2-type domains are found at residues 1126 to 1222, 1226 to 1311, 1319 to 1401, 1410 to 1499, 1503 to 1585, 1588 to 1680, 1690 to 1785, 1793 to 1878, 1886 to 1970, 1973 to 2069, 2073 to 2163, 2173 to 2260, 2263 to 2343, 2349 to 2435, and 2446 to 2530; these read PHEV…KRIS, PQPV…AVLE, PKVD…EPVQ, PQRG…ARLN, PQAI…RPVE, PARV…TPAT, PQVE…STLN, PRPV…VRLE, PTAV…GNVN, PSLT…IYIE, PSRI…AVHV, PKVE…TAVS, QQDK…GFVT, PDTI…RTVL, and TFTV…VDLQ. Residues 1388-1400 are compositionally biased toward polar residues; sequence DPSDNTPLQSEPV. Disordered stretches follow at residues 1388-1426 and 1478-1497; these read DPSD…QTVN and EYEC…PPAR. N-linked (GlcNAc...) asparagine glycosylation is present at N1422. 4 disulfides stabilise this stretch: C1435/C1481, C1527/C1573, C1618/C1663, and C1719/C1767. Positions 1481–1497 are enriched in polar residues; sequence CTSTEPDGSTQLSPPAR. The segment at 1773–1792 is disordered; sequence NSPPVKTNPSTLNVTPEGTP. Positions 1776–1788 are enriched in polar residues; that stretch reads PVKTNPSTLNVTP. 15 disulfides stabilise this stretch: C1814–C1861, C1907–C1954, C1998–C2053, C2099–C2147, C2195–C2242, C2284–C2329, C2374–C2420, C2467–C2514, C2713–C2725, C2719–C2736, C2738–C2747, C2754–C2764, C2759–C2773, C2775–C2784, and C2935–C2960. The disordered stretch occupies residues 1880 to 1918; the sequence is TEDQEPPTAVVEPRTWNGKPGERHQFRCITTGSPTPKIT. Positions 1907–1918 are enriched in polar residues; it reads CITTGSPTPKIT. N-linked (GlcNAc...) asparagine glycosylation is present at N2476. A Laminin G-like 1 domain is found at 2532–2713; sequence DDFIPVIDGE…PSSVVKYDAC (182 aa). Residues 2793–2960 form the Laminin G-like 2 domain; it reads PLGFTSDTSF…LSSSGDISSC (168 aa). The N-linked (GlcNAc...) asparagine glycan is linked to N2950. Low complexity predominate over residues 2952–2963; it reads SSSGDISSCEES. Residues 2952–3124 form a disordered region; the sequence is SSSGDISSCE…GTLPPDSSSE (173 aa). Composition is skewed to acidic residues over residues 2979 to 2990 and 2999 to 3010; these read EEPEAVIEEPTT and PITEEPTEEPTT. Positions 3011 to 3033 are enriched in low complexity; sequence TEEPTTTEEPTTTTEEPTTTTTE. Basic and acidic residues predominate over residues 3034 to 3044; the sequence is EPYHIYETSRD. Residues 3049–3079 are compositionally biased toward low complexity; the sequence is IIIPVETTTTSTTTTSTTEEPEAEPALVLPT. The span at 3081-3094 shows a compositional bias: acidic residues; that stretch reads PVEENDVSDEEEEI. 4 disulfides stabilise this stretch: C3141–C3152, C3146–C3162, C3164–C3173, and C3333–C3359. N-linked (GlcNAc...) asparagine glycans are attached at residues N3143 and N3156. Residues 3180 to 3359 form the Laminin G-like 3 domain; sequence EHAARFDGDA…AIDGKNVKPC (180 aa).

Component of an integrin containing attachment complex, composed of at least pat-2, pat-3, pat-4, pat-6, unc-52, unc-97 and unc-112. Detected on embryonic and adult body wall muscle cells (at protein level). Found in the basement membrane of all contractile tissues (at protein level). Expressed in gonadal sheath cells and spermatheca.

The protein localises to the secreted. It localises to the extracellular space. The protein resides in the extracellular matrix. Its subcellular location is the basement membrane. It is found in the cytoplasm. The protein localises to the myofibril. It localises to the sarcomere. The protein resides in the m line. Functionally, component of an integrin containing attachment complex, which is required for muscle development and maintenance. Probable structural role in myofilament assembly and/or attachment of the myofilament lattice to the cell membrane. May be an extracellular anchor for integrin receptors in body wall muscles and myoepithelial sheath cells. During the formation of neuromuscular junctions at the larval stage, negatively regulates membrane protrusion from body wall muscles, probably downstream of the integrin complex formed by pat-2 and pat-3. Involved in ovulation. Required for normal lifespan. The chain is Basement membrane proteoglycan from Caenorhabditis elegans.